A 335-amino-acid chain; its full sequence is Probable G-protein coupled receptor 174 (335 aa).

Residues 1 to 27 (MTDNFTCNKTDGDNTDFRYFIYAVTYT) lie on the Extracellular side of the membrane. N-linked (GlcNAc...) asparagine glycans are attached at residues Asn4 and Asn8. A helical membrane pass occupies residues 28-48 (VILVPGLIGNILALWVFYGYM). The Cytoplasmic segment spans residues 49 to 53 (KETKR). A helical transmembrane segment spans residues 54 to 74 (AVVFMINLAIADLLQILSLPL). Residues 75-91 (RIFYYLNHDWPFGPGLC) lie on the Extracellular side of the membrane. Cys91 and Cys168 form a disulfide bridge. A helical membrane pass occupies residues 92–112 (MFCFYLKYVNMYASIYFLVCI). At 113-134 (SVRRFWFLMYPFRFNDCKQKYD) the chain is on the cytoplasmic side. Residues 135–155 (LYISIIGWLIICLACLLFPLL) traverse the membrane as a helical segment. Residues 156–182 (RTNDDTPGNRTKCFVDLPIRNVNLAQS) are Extracellular-facing. A glycan (N-linked (GlcNAc...) asparagine) is linked at Asn164. A helical transmembrane segment spans residues 183-203 (VAMITIGEVVGFVTPLMIVLY). The Cytoplasmic portion of the chain corresponds to 204-231 (CTWKTALSLQNKYPISQHLGEKKKALKM). A helical membrane pass occupies residues 232–252 (ILTCAGVFLVCFVPYHFSFPL). Over 253 to 268 (DFLVKSNEIKSCFARR) the chain is Extracellular. The helical transmembrane segment at 269-289 (VILIFHSVALCLASLNSCLDP) threads the bilayer. Residues 290-335 (VIYYFTTNEFRRRLSRQDLPDNIQLHTKSYKIASNHATSTVAAELC) are Cytoplasmic-facing.

The protein belongs to the G-protein coupled receptor 1 family. In terms of assembly, interacts with GNA13. Interacts with CCL21. Expressed in spleen and, at low levels, in brain. Highly expressed in developing and mature regulatory T-cells.

It is found in the cell membrane. Its function is as follows. G-protein-coupled receptor of lysophosphatidylserine (LysoPS) that plays different roles in immune response. Plays a negative role in regulatory T-cell accumulation and homeostasis. Under inflammatory conditions where LysoPS production increases, contributes to the down-regulation of regulatory T-cell activity to favor effector response. Mediates the suppression of IL-2 production in activated T-lymphocytes leading to inhibition of growth, proliferation and differentiation of T-cells. Mechanistically, acts via G(s)-containing heterotrimeric G proteins to trigger elevated cyclic AMP levels and protein kinase A/PKA activity, which may in turn act to antagonize proximal TCR signaling. Plays an important role in the initial period of sepsis through the regulation of macrophage polarization and pro- and anti-inflammatory cytokine secretions. Upon testosterone treatment, acts as a receptor for CCL21 and subsequently triggers through G(q)-alpha and G(12)/G(13) proteins a calcium flux leading to chemotactic effects on activated B-cells. Signals via GNA13 and PKA to promote CD86 up-regulation by follicular B-cells. This Mus musculus (Mouse) protein is Probable G-protein coupled receptor 174 (Gpr174).